The primary structure comprises 568 residues: Matrix metalloproteinase-21 (568 aa).

The N-terminal stretch at M1–P24 is a signal peptide. Positions E25–Q143 are excised as a propeptide. The Cysteine switch signature appears at P110–T117. The Zn(2+) site is built by C112 and H282. Residue E283 is part of the active site. The Zn(2+) site is built by H286 and H292. The cysteines at positions 328 and 559 are disulfide-linked. Hemopexin repeat units lie at residues K329–I388, T390–I446, P447–I495, and F502–V558. N-linked (GlcNAc...) asparagine glycosylation is present at N371.

It belongs to the peptidase M10A family. Zn(2+) serves as cofactor. Requires Ca(2+) as cofactor. The precursor is cleaved by a furin endopeptidase.

The protein localises to the secreted. Its function is as follows. Plays a specialized role in the generation of left-right asymmetry during embryogenesis. May act as a negative regulator of the NOTCH-signaling pathway. Cleaves alpha-1-antitrypsin. The polypeptide is Matrix metalloproteinase-21 (Mmp21) (Mus musculus (Mouse)).